The primary structure comprises 259 residues: Undecaprenyl-diphosphatase 3 (259 aa).

8 helical membrane-spanning segments follow: residues 1–21, 39–59, 71–91, 99–119, 133–153, 174–194, 208–228, and 236–256; these read MNWL…FLPI, AGLF…FIYY, FSKL…IGLL, ISKT…FLYM, ITYK…FPAI, AYFS…LQFV, SLIV…SWMI, and LKVF…LQFT.

It belongs to the UppP family.

It is found in the cell membrane. It carries out the reaction di-trans,octa-cis-undecaprenyl diphosphate + H2O = di-trans,octa-cis-undecaprenyl phosphate + phosphate + H(+). Functionally, catalyzes the dephosphorylation of undecaprenyl diphosphate (UPP). Confers resistance to bacitracin. The polypeptide is Undecaprenyl-diphosphatase 3 (Bacillus cereus (strain ATCC 10987 / NRS 248)).